The primary structure comprises 245 residues: Ribosomal protein L11 methyltransferase (245 aa).

Residues T101, G122, D144, and N184 each coordinate S-adenosyl-L-methionine.

The protein belongs to the methyltransferase superfamily. PrmA family.

The protein resides in the cytoplasm. The catalysed reaction is L-lysyl-[protein] + 3 S-adenosyl-L-methionine = N(6),N(6),N(6)-trimethyl-L-lysyl-[protein] + 3 S-adenosyl-L-homocysteine + 3 H(+). Functionally, methylates ribosomal protein L11. This Aquifex aeolicus (strain VF5) protein is Ribosomal protein L11 methyltransferase.